The following is an 800-amino-acid chain: Aldehyde dehydrogenase family 16 member A1 (800 aa).

Belongs to the aldehyde dehydrogenase family. In terms of assembly, interacts with SPG21.

The protein is Aldehyde dehydrogenase family 16 member A1 (ALDH16A1) of Bos taurus (Bovine).